The following is a 440-amino-acid chain: C4-dicarboxylate transport protein (440 aa).

The next 9 membrane-spanning stretches (helical) occupy residues 15–35 (VLVA…TGVA), 46–66 (LIKM…IAGM), 78–98 (YALL…LVVV), 146–166 (AFAN…GFAL), 190–210 (IINM…AFTI), 224–244 (LMAC…GGIC), 291–311 (VVGL…SIYL), 332–352 (ITLL…TGSG), and 354–374 (IVLA…LALI). A disordered region spans residues 419–440 (GGSPLVDTRPTDDLGVAEGPAR).

This sequence belongs to the dicarboxylate/amino acid:cation symporter (DAACS) (TC 2.A.23) family.

Its subcellular location is the cell inner membrane. Its function is as follows. Responsible for the transport of dicarboxylates such as succinate, fumarate, and malate from the periplasm across the membrane. This chain is C4-dicarboxylate transport protein, found in Pseudomonas entomophila (strain L48).